The primary structure comprises 403 residues: Imidazolonepropionase (403 aa).

Fe(3+) is bound by residues His-69 and His-71. Residues His-69 and His-71 each coordinate Zn(2+). 3 residues coordinate 4-imidazolone-5-propanoate: Arg-78, Tyr-141, and His-174. Tyr-141 is an N-formimidoyl-L-glutamate binding site. His-239 is a binding site for Fe(3+). Residue His-239 participates in Zn(2+) binding. Gln-242 is a 4-imidazolone-5-propanoate binding site. Residue Asp-314 coordinates Fe(3+). Asp-314 lines the Zn(2+) pocket. Residues Asn-316 and Gly-318 each contribute to the N-formimidoyl-L-glutamate site. Residue Ser-319 coordinates 4-imidazolone-5-propanoate.

Belongs to the metallo-dependent hydrolases superfamily. HutI family. Zn(2+) serves as cofactor. The cofactor is Fe(3+).

It localises to the cytoplasm. The enzyme catalyses 4-imidazolone-5-propanoate + H2O = N-formimidoyl-L-glutamate. Its pathway is amino-acid degradation; L-histidine degradation into L-glutamate; N-formimidoyl-L-glutamate from L-histidine: step 3/3. Its function is as follows. Catalyzes the hydrolytic cleavage of the carbon-nitrogen bond in imidazolone-5-propanoate to yield N-formimidoyl-L-glutamate. It is the third step in the universal histidine degradation pathway. This is Imidazolonepropionase from Legionella pneumophila (strain Paris).